The following is an 80-amino-acid chain: Large ribosomal subunit protein bL31 (80 aa).

Zn(2+) is bound by residues Cys-16, Cys-18, Cys-38, and Cys-41.

The protein belongs to the bacterial ribosomal protein bL31 family. Type A subfamily. Part of the 50S ribosomal subunit. Zn(2+) serves as cofactor.

Binds the 23S rRNA. The protein is Large ribosomal subunit protein bL31 of Mycobacterium bovis (strain ATCC BAA-935 / AF2122/97).